Reading from the N-terminus, the 1621-residue chain is Lysophospholipase NTE1 (1621 aa).

At 1 to 12 the chain is on the cytoplasmic side; it reads MSSIPTPPDANG. The chain crosses the membrane as a helical span at residues 13–33; it reads NPLIALAVAVIYAILYVLQGV. At 34–59 the chain is on the lumenal side; it reads KYGVSLLTIGIPSCIVRMLQYSLTIS. The helical transmembrane segment at 60–80 threads the bilayer; the sequence is LGFPHLLALFAGALLALFFLI. The Cytoplasmic portion of the chain corresponds to 81–1621; it reads RYRYLTRYAQ…RGNRLRRMSI (1541 aa). 7 disordered regions span residues 188–209, 250–379, 545–566, 648–667, 711–735, 772–791, and 839–870; these read PDAS…TRPS, EGEE…SVPR, QTAT…LDET, WNLN…QRDD, VSAL…GSTR, DDEA…GASG, and FRST…ERPF. Low complexity-rich tracts occupy residues 195–209 and 348–361; these read TPTP…TRPS and RRSQ…RLNS. A nucleoside 3',5'-cyclic phosphate-binding positions include 788–907 and 951–1070; these read GASG…GYLS and RLLS…IAGR. The segment covering 839 to 867 has biased composition (polar residues); it reads FRSTSSNQENPNSTPGSKHRQSSFGSSNE. The region spanning 1316–1480 is the PNPLA domain; that stretch reads LVLGGGGARG…MDNTPIQPLR (165 aa). The GXGXXG signature appears at 1320–1325; the sequence is GGGARG. The short motif at 1347-1351 is the GXSXG element; sequence GCSIG. Residue S1349 is the Nucleophile of the active site. D1467 acts as the Proton acceptor in catalysis. The DGA/G motif lies at 1467 to 1469; that stretch reads DGG.

The protein belongs to the NTE family.

Its subcellular location is the endoplasmic reticulum membrane. It catalyses the reaction a 1-acyl-sn-glycero-3-phosphocholine + H2O = sn-glycerol 3-phosphocholine + a fatty acid + H(+). With respect to regulation, inhibited by organophosphorus esters. In terms of biological role, intracellular phospholipase B that catalyzes the double deacylation of phosphatidylcholine (PC) to glycerophosphocholine (GroPCho). Plays an important role in membrane lipid homeostasis. Responsible for the rapid PC turnover in response to inositol, elevated temperatures, or when choline is present in the growth medium. The sequence is that of Lysophospholipase NTE1 (NTE1) from Cryptococcus neoformans var. neoformans serotype D (strain B-3501A) (Filobasidiella neoformans).